Reading from the N-terminus, the 688-residue chain is T-box transcription factor TBX2-A (688 aa).

The segment at residues 104–277 (LWDQFHKIGT…NNPFAKGFRD (174 aa)) is a DNA-binding region (T-box). Disordered stretches follow at residues 301–436 (CKAD…GSLS) and 606–688 (PSTN…ETPK). Composition is skewed to basic and acidic residues over residues 340-361 (NNRE…EIRS), 378-403 (RLED…KDGS), and 412-430 (SLEK…KSDP). The span at 621–636 (PGSESSKPGSSRESSP) shows a compositional bias: low complexity. Positions 655 to 679 (ASMKDSINELQNIQRLVSGLESQRE) form a coiled coil. The span at 676–688 (SQREISPGRETPK) shows a compositional bias: basic and acidic residues.

In terms of assembly, binds DNA as a monomer.

It is found in the nucleus. Transcription factor which acts as a transcriptional repressor. May also function as a transcriptional activator. Binds to the palindromic T site 5'-TTCACACCTAGGTGTGAA-3' DNA sequence, or a half-site, which are present in the regulatory region of several genes. The polypeptide is T-box transcription factor TBX2-A (tbx2-a) (Xenopus laevis (African clawed frog)).